The chain runs to 455 residues: Bifunctional protein GlmU (455 aa).

The segment at 1–227 (MGLSVIILAA…CEEVQGVNDR (227 aa)) is pyrophosphorylase. UDP-N-acetyl-alpha-D-glucosamine is bound by residues 8 to 11 (LAAG), lysine 22, glutamine 73, 78 to 79 (GT), 100 to 102 (YGD), glycine 137, glutamate 152, asparagine 167, and asparagine 225. Aspartate 102 lines the Mg(2+) pocket. Asparagine 225 contacts Mg(2+). Positions 228 to 248 (WELTKLERYYQRLMAKKLSLA) are linker. Residues 249–455 (GVTIIDPERF…KGWHRPTKKE (207 aa)) are N-acetyltransferase. The UDP-N-acetyl-alpha-D-glucosamine site is built by arginine 332 and lysine 350. The Proton acceptor role is filled by histidine 362. Tyrosine 365 and asparagine 376 together coordinate UDP-N-acetyl-alpha-D-glucosamine. Residues alanine 379, 385 to 386 (NY), serine 404, alanine 422, and arginine 439 each bind acetyl-CoA.

This sequence in the N-terminal section; belongs to the N-acetylglucosamine-1-phosphate uridyltransferase family. The protein in the C-terminal section; belongs to the transferase hexapeptide repeat family. Homotrimer. Requires Mg(2+) as cofactor.

The protein localises to the cytoplasm. It carries out the reaction alpha-D-glucosamine 1-phosphate + acetyl-CoA = N-acetyl-alpha-D-glucosamine 1-phosphate + CoA + H(+). The catalysed reaction is N-acetyl-alpha-D-glucosamine 1-phosphate + UTP + H(+) = UDP-N-acetyl-alpha-D-glucosamine + diphosphate. It functions in the pathway nucleotide-sugar biosynthesis; UDP-N-acetyl-alpha-D-glucosamine biosynthesis; N-acetyl-alpha-D-glucosamine 1-phosphate from alpha-D-glucosamine 6-phosphate (route II): step 2/2. Its pathway is nucleotide-sugar biosynthesis; UDP-N-acetyl-alpha-D-glucosamine biosynthesis; UDP-N-acetyl-alpha-D-glucosamine from N-acetyl-alpha-D-glucosamine 1-phosphate: step 1/1. It participates in bacterial outer membrane biogenesis; LPS lipid A biosynthesis. Functionally, catalyzes the last two sequential reactions in the de novo biosynthetic pathway for UDP-N-acetylglucosamine (UDP-GlcNAc). The C-terminal domain catalyzes the transfer of acetyl group from acetyl coenzyme A to glucosamine-1-phosphate (GlcN-1-P) to produce N-acetylglucosamine-1-phosphate (GlcNAc-1-P), which is converted into UDP-GlcNAc by the transfer of uridine 5-monophosphate (from uridine 5-triphosphate), a reaction catalyzed by the N-terminal domain. This is Bifunctional protein GlmU from Coxiella burnetii (strain CbuK_Q154) (Coxiella burnetii (strain Q154)).